The chain runs to 271 residues: 3-methyl-2-oxobutanoate hydroxymethyltransferase (271 aa).

Asp-51 and Asp-90 together coordinate Mg(2+). 3-methyl-2-oxobutanoate contacts are provided by residues 51–52 (DS), Asp-90, and Lys-119. A Mg(2+)-binding site is contributed by Glu-121. Glu-188 (proton acceptor) is an active-site residue.

Belongs to the PanB family. In terms of assembly, homodecamer; pentamer of dimers. Mg(2+) serves as cofactor.

The protein localises to the cytoplasm. It carries out the reaction 3-methyl-2-oxobutanoate + (6R)-5,10-methylene-5,6,7,8-tetrahydrofolate + H2O = 2-dehydropantoate + (6S)-5,6,7,8-tetrahydrofolate. It participates in cofactor biosynthesis; (R)-pantothenate biosynthesis; (R)-pantoate from 3-methyl-2-oxobutanoate: step 1/2. Its function is as follows. Catalyzes the reversible reaction in which hydroxymethyl group from 5,10-methylenetetrahydrofolate is transferred onto alpha-ketoisovalerate to form ketopantoate. The chain is 3-methyl-2-oxobutanoate hydroxymethyltransferase from Aromatoleum aromaticum (strain DSM 19018 / LMG 30748 / EbN1) (Azoarcus sp. (strain EbN1)).